Consider the following 531-residue polypeptide: Beta-hexosaminidase subunit beta (531 aa).

The signal sequence occupies residues 1–24; sequence MRHRGLGLAALLALLAAVAPRSSA. Residue Asn50 is glycosylated (N-linked (GlcNAc...) asparagine). Cysteines 65 and 111 form a disulfide. Residues Asn116, Asn164, and Asn301 are each glycosylated (N-linked (GlcNAc...) asparagine). Cystine bridges form between Cys283-Cys334 and Cys508-Cys525. The Proton donor role is filled by Glu329.

It belongs to the glycosyl hydrolase 20 family. In terms of assembly, there are 3 forms of beta-hexosaminidase: hexosaminidase A is a heterodimer composed of one subunit alpha and one subunit beta (chain A and B); hexosaminidase B is a homodimer of two beta subunits (two chains A and B); hexosaminidase S is a homodimer of two alpha subunits. The composition of the dimer (isozyme A versus isozyme S) has a significant effect on the substrate specificity of the alpha subunit active site.

Its subcellular location is the lysosome. It is found in the cytoplasmic vesicle. It localises to the secretory vesicle. The protein localises to the cortical granule. It catalyses the reaction Hydrolysis of terminal non-reducing N-acetyl-D-hexosamine residues in N-acetyl-beta-D-hexosaminides.. The enzyme catalyses N-acetyl-beta-D-galactosaminyl-(1-&gt;4)-beta-D-3-sulfogalactosyl-(1-&gt;4)-beta-D-glucosyl-(1&lt;-&gt;1')-ceramide + H2O = a beta-D-3-sulfogalactosyl-(1-&gt;4)-beta-D-glucosyl-(1&lt;-&gt;1')-ceramide + N-acetyl-beta-D-galactosamine. It carries out the reaction a ganglioside GM2 (d18:1(4E)) + H2O = a ganglioside GM3 (d18:1(4E)) + N-acetyl-beta-D-galactosamine. The catalysed reaction is a ganglioside GM2 + H2O = a ganglioside GM3 + N-acetyl-beta-D-galactosamine. It catalyses the reaction beta-D-GalNAc-(1-&gt;4)-alpha-L-IdoA-(1-&gt;3)-beta-D-GalNAc-4-sulfate-(1-&gt;4)-alpha-L-IdoA-(1-&gt;3)-D-GalNAc-4-sulfate + H2O = alpha-L-IdoA-(1-&gt;3)-beta-D-GalNAc-4-sulfate-(1-&gt;4)-alpha-L-IdoA-(1-&gt;3)-D-GalNAc-4-sulfate + N-acetyl-D-galactosamine. The enzyme catalyses N-acetyl-beta-D-6-sulfogalactosaminyl-(1-&gt;4)-alpha-L-iduronyl-(1-&gt;3)-N-acetyl-D-6-sulfogalactosamine + H2O = alpha-L-iduronyl-(1-&gt;3)-N-acetyl-D-6-sulfogalactosamine + N-acetyl-D-6-sulfogalactosamine. With respect to regulation, addition of GM2A stimulates the hydrolysis of sulfated glycosphingolipid SM2 and the ganglioside GM2. Its function is as follows. Hydrolyzes the non-reducing end N-acetyl-D-hexosamine and/or sulfated N-acetyl-D-hexosamine of glycoconjugates, such as the oligosaccharide moieties from proteins and neutral glycolipids, or from certain mucopolysaccharides. The isozyme B does not hydrolyze each of these substrates, however hydrolyzes efficiently neutral oligosaccharide. Only the isozyme A is responsible for the degradation of GM2 gangliosides in the presence of GM2A. During fertilization is responsible, at least in part, for the zona block to polyspermy. Present in the cortical granules of non-activated oocytes, is exocytosed during the cortical reaction in response to oocyte activation and inactivates the sperm galactosyltransferase-binding site, accounting for the block in sperm binding to the zona pellucida. This chain is Beta-hexosaminidase subunit beta, found in Felis catus (Cat).